Consider the following 321-residue polypeptide: Probable GDP-L-fucose synthase (321 aa).

8 to 14 (GGTGLVG) contributes to the NADP(+) binding site. Y136 (proton donor/acceptor) is an active-site residue. Residues K140, 163–166 (PCNI), and H179 each bind NADP(+). Substrate is bound by residues R187, R215, and D277.

This sequence belongs to the NAD(P)-dependent epimerase/dehydratase family. Fucose synthase subfamily. As to quaternary structure, homodimer.

The enzyme catalyses GDP-beta-L-fucose + NADP(+) = GDP-4-dehydro-alpha-D-rhamnose + NADPH + H(+). It functions in the pathway nucleotide-sugar biosynthesis; GDP-L-fucose biosynthesis via de novo pathway; GDP-L-fucose from GDP-alpha-D-mannose: step 2/2. Catalyzes the two-step NADP-dependent conversion of GDP-4-dehydro-6-deoxy-D-mannose to GDP-fucose, involving an epimerase and a reductase reaction. This is Probable GDP-L-fucose synthase (Gmer) from Drosophila melanogaster (Fruit fly).